The chain runs to 198 residues: Recombination protein RecR (198 aa).

The C4-type zinc finger occupies 57–72 (CSICGNLTESDPCAIC). The Toprim domain maps to 80–175 (TTILVVEESK…KVTRLARGLA (96 aa)).

The protein belongs to the RecR family.

Its function is as follows. May play a role in DNA repair. It seems to be involved in an RecBC-independent recombinational process of DNA repair. It may act with RecF and RecO. In Lactococcus lactis subsp. lactis (strain IL1403) (Streptococcus lactis), this protein is Recombination protein RecR.